Reading from the N-terminus, the 525-residue chain is tRNA(Ile)-lysidine synthase (525 aa).

Residue 32–37 (SGGRDS) participates in ATP binding.

Belongs to the tRNA(Ile)-lysidine synthase family.

Its subcellular location is the cytoplasm. The catalysed reaction is cytidine(34) in tRNA(Ile2) + L-lysine + ATP = lysidine(34) in tRNA(Ile2) + AMP + diphosphate + H(+). Its function is as follows. Ligates lysine onto the cytidine present at position 34 of the AUA codon-specific tRNA(Ile) that contains the anticodon CAU, in an ATP-dependent manner. Cytidine is converted to lysidine, thus changing the amino acid specificity of the tRNA from methionine to isoleucine. The chain is tRNA(Ile)-lysidine synthase from Psychrobacter sp. (strain PRwf-1).